We begin with the raw amino-acid sequence, 279 residues long: Probable endonuclease 4 (279 aa).

The Zn(2+) site is built by His66, His106, Glu142, Asp175, His178, His212, Asp225, His227, and Glu257.

Belongs to the AP endonuclease 2 family. The cofactor is Zn(2+).

It catalyses the reaction Endonucleolytic cleavage to 5'-phosphooligonucleotide end-products.. Endonuclease IV plays a role in DNA repair. It cleaves phosphodiester bonds at apurinic or apyrimidinic (AP) sites, generating a 3'-hydroxyl group and a 5'-terminal sugar phosphate. This chain is Probable endonuclease 4, found in Moorella thermoacetica (strain ATCC 39073 / JCM 9320).